Here is a 501-residue protein sequence, read N- to C-terminus: ADP,ATP carrier protein 3 (501 aa).

12 helical membrane-spanning segments follow: residues 23-43 (LKLFIPMALMMLCILFNFGAL), 59-79 (IISFLKLWLVLPSCVIFTILY), 90-110 (YIFYSIVGTFLLFFLLFAYII), 146-166 (YALMYIFSELWSAVVINLMFW), 183-203 (PVLGMVGNIGLIIAGSVLVFF), 227-247 (IMLQPIISIIVTAGIIAMFLF), 293-313 (IALLIICYGLLINIVEGPWKA), 326-346 (VNFMGMFNIWMGISCVTFMII), 361-381 (LLTPIMLSITGFMFFIFIIFI), 383-403 (EIGTCFGDFNLLYVAIIVGAI), 446-466 (FGKSLGAFIQSLIFIIIPTAT), and 470-490 (IIIYLLVIFIVMMNLWIWNII).

This sequence belongs to the ADP/ATP translocase tlc family.

It is found in the cell membrane. Functionally, provides the rickettsial cell with host ATP in exchange for rickettsial ADP. This is an obligate exchange system. This energy acquiring activity is an important component of rickettsial parasitism. This Rickettsia prowazekii (strain Madrid E) protein is ADP,ATP carrier protein 3 (tlcC).